A 167-amino-acid polypeptide reads, in one-letter code: Small ribosomal subunit protein mS25 (167 aa).

The protein belongs to the mitochondrion-specific ribosomal protein mS25 family. In terms of assembly, component of the mitochondrial ribosome small subunit (28S) which comprises a 12S rRNA and about 30 distinct proteins.

It is found in the mitochondrion. In Drosophila melanogaster (Fruit fly), this protein is Small ribosomal subunit protein mS25 (mRpS25).